A 203-amino-acid polypeptide reads, in one-letter code: MSVAPTRGNLIALKQQLRLAIQGYDLLERKRTVIMRELVGLIEEAKKLQEELLSTFEEAYRSLQKANLDLGIESVEEYASGIPEFKAMKIIFSSVMGVEVPEIQIERFETEIPYEIYSTNAALDQAYLVFRKALELVARVAVIENKVYRLAHEAKKTKKRVNALENLIIPHLKETIKYIQDTLEELEREELFRLKRLKEKVAR.

Belongs to the V-ATPase D subunit family.

In terms of biological role, produces ATP from ADP in the presence of a proton gradient across the membrane. The polypeptide is V-type ATP synthase subunit D (Thermotoga neapolitana (strain ATCC 49049 / DSM 4359 / NBRC 107923 / NS-E)).